Here is a 687-residue protein sequence, read N- to C-terminus: Polyphosphate kinase (687 aa).

Asn-45 provides a ligand contact to ATP. Mg(2+) is bound by residues Arg-375 and Arg-405. Residue His-435 is the Phosphohistidine intermediate of the active site. The ATP site is built by Tyr-472, Arg-568, and His-596.

This sequence belongs to the polyphosphate kinase 1 (PPK1) family. The cofactor is Mg(2+). In terms of processing, an intermediate of this reaction is the autophosphorylated ppk in which a phosphate is covalently linked to a histidine residue through a N-P bond.

The catalysed reaction is [phosphate](n) + ATP = [phosphate](n+1) + ADP. In terms of biological role, catalyzes the reversible transfer of the terminal phosphate of ATP to form a long-chain polyphosphate (polyP). The chain is Polyphosphate kinase from Burkholderia vietnamiensis (strain G4 / LMG 22486) (Burkholderia cepacia (strain R1808)).